A 417-amino-acid chain; its full sequence is Serine--tRNA ligase (417 aa).

232–234 (TAE) lines the L-serine pocket. ATP-binding positions include 263 to 265 (RRE) and valine 279. Residue glutamate 286 participates in L-serine binding. Residue 350–353 (EISS) coordinates ATP. Serine 385 lines the L-serine pocket.

Belongs to the class-II aminoacyl-tRNA synthetase family. Type-1 seryl-tRNA synthetase subfamily. Homodimer. The tRNA molecule binds across the dimer.

It localises to the cytoplasm. It catalyses the reaction tRNA(Ser) + L-serine + ATP = L-seryl-tRNA(Ser) + AMP + diphosphate + H(+). The catalysed reaction is tRNA(Sec) + L-serine + ATP = L-seryl-tRNA(Sec) + AMP + diphosphate + H(+). The protein operates within aminoacyl-tRNA biosynthesis; selenocysteinyl-tRNA(Sec) biosynthesis; L-seryl-tRNA(Sec) from L-serine and tRNA(Sec): step 1/1. Functionally, catalyzes the attachment of serine to tRNA(Ser). Is also able to aminoacylate tRNA(Sec) with serine, to form the misacylated tRNA L-seryl-tRNA(Sec), which will be further converted into selenocysteinyl-tRNA(Sec). The polypeptide is Serine--tRNA ligase (Leptospira borgpetersenii serovar Hardjo-bovis (strain JB197)).